A 361-amino-acid polypeptide reads, in one-letter code: Probable sugar phosphate/phosphate translocator At1g12500 (361 aa).

V2 is modified (N-acetylvaline). Helical transmembrane passes span 56-76 (TILT…VLLL), 90-110 (IFLT…VINI), 125-145 (FLKI…GNTS), 153-173 (FNQA…FLIT), 192-212 (IVLA…ICVA), 240-260 (LLLY…LYIE), 276-296 (LIIF…LTNF), 306-326 (TLQV…VLIF), and 329-349 (PVTV…VLYS). One can recognise an EamA domain in the interval 89–196 (PIFLTMTHML…PVVSGIVLAS (108 aa)).

It belongs to the TPT transporter family. TPT (TC 2.A.7.9) subfamily.

The protein localises to the membrane. This is Probable sugar phosphate/phosphate translocator At1g12500 from Arabidopsis thaliana (Mouse-ear cress).